The sequence spans 118 residues: 5-hydroxyisourate hydrolase (118 aa).

3 residues coordinate substrate: His7, Arg46, and Tyr115.

It belongs to the transthyretin family. 5-hydroxyisourate hydrolase subfamily. In terms of assembly, homotetramer.

It carries out the reaction 5-hydroxyisourate + H2O = 5-hydroxy-2-oxo-4-ureido-2,5-dihydro-1H-imidazole-5-carboxylate + H(+). Catalyzes the hydrolysis of 5-hydroxyisourate (HIU) to 2-oxo-4-hydroxy-4-carboxy-5-ureidoimidazoline (OHCU). The chain is 5-hydroxyisourate hydrolase from Brucella suis biovar 1 (strain 1330).